A 493-amino-acid polypeptide reads, in one-letter code: Glutamyl-tRNA(Gln) amidotransferase subunit A (493 aa).

Active-site charge relay system residues include Lys-79 and Ser-159. Ser-183 serves as the catalytic Acyl-ester intermediate.

It belongs to the amidase family. GatA subfamily. Heterotrimer of A, B and C subunits.

The enzyme catalyses L-glutamyl-tRNA(Gln) + L-glutamine + ATP + H2O = L-glutaminyl-tRNA(Gln) + L-glutamate + ADP + phosphate + H(+). Functionally, allows the formation of correctly charged Gln-tRNA(Gln) through the transamidation of misacylated Glu-tRNA(Gln) in organisms which lack glutaminyl-tRNA synthetase. The reaction takes place in the presence of glutamine and ATP through an activated gamma-phospho-Glu-tRNA(Gln). The protein is Glutamyl-tRNA(Gln) amidotransferase subunit A of Brucella canis (strain ATCC 23365 / NCTC 10854 / RM-666).